The sequence spans 311 residues: Probable dihydroorotate dehydrogenase A (fumarate) (311 aa).

FMN-binding positions include serine 20 and 44–45 (KT). Residues lysine 44, 68–72 (NSMGL), and asparagine 127 contribute to the substrate site. Asparagine 127 provides a ligand contact to FMN. Cysteine 130 (nucleophile) is an active-site residue. Residues lysine 164 and isoleucine 192 each contribute to the FMN site. 193–194 (NS) is a substrate binding site. FMN-binding positions include glycine 221, 249-250 (GG), and 271-272 (GT).

The protein belongs to the dihydroorotate dehydrogenase family. Type 1 subfamily. As to quaternary structure, homodimer. Requires FMN as cofactor.

The protein localises to the cytoplasm. The catalysed reaction is (S)-dihydroorotate + fumarate = orotate + succinate. Its pathway is pyrimidine metabolism; UMP biosynthesis via de novo pathway. Its function is as follows. Catalyzes the conversion of dihydroorotate to orotate with fumarate as the electron acceptor. In Enterococcus faecalis (strain ATCC 700802 / V583), this protein is Probable dihydroorotate dehydrogenase A (fumarate) (pyrDA).